We begin with the raw amino-acid sequence, 185 residues long: Ribosome-recycling factor (185 aa).

Belongs to the RRF family.

The protein resides in the cytoplasm. Functionally, responsible for the release of ribosomes from messenger RNA at the termination of protein biosynthesis. May increase the efficiency of translation by recycling ribosomes from one round of translation to another. This chain is Ribosome-recycling factor, found in Ehrlichia ruminantium (strain Welgevonden).